Here is a 97-residue protein sequence, read N- to C-terminus: MSQNATVNVDIKLGVNKFHVDEGHPHIILAENPDINEFHKLMKACPAGLYKQDDAGNIHFDSAGCLECGTCRVLCGNTILEQWQYPAGTFGIDFRYG.

Belongs to the bacterial-type ferredoxin family. FixX subfamily.

Could be a 3Fe-4S cluster-containing protein. Probably participates in a redox process with YdiQ, YdiR and YdiS. The protein is Ferredoxin-like protein YdiT (ydiT) of Escherichia coli (strain K12).